Consider the following 677-residue polypeptide: Methionine--tRNA ligase (677 aa).

A 'HIGH' region motif is present at residues 15 to 25; the sequence is PYANGSIHLGH. Residues cysteine 146, cysteine 149, cysteine 159, and cysteine 162 each contribute to the Zn(2+) site. The 'KMSKS' region signature appears at 333–337; that stretch reads KMSKS. Lysine 336 is a binding site for ATP. A tRNA-binding domain is found at 575 to 677; sequence DFAKIDLRVA…DGAKPGQQVK (103 aa).

Belongs to the class-I aminoacyl-tRNA synthetase family. MetG type 1 subfamily. In terms of assembly, homodimer. The cofactor is Zn(2+).

The protein localises to the cytoplasm. The catalysed reaction is tRNA(Met) + L-methionine + ATP = L-methionyl-tRNA(Met) + AMP + diphosphate. Functionally, is required not only for elongation of protein synthesis but also for the initiation of all mRNA translation through initiator tRNA(fMet) aminoacylation. The polypeptide is Methionine--tRNA ligase (Salmonella paratyphi C (strain RKS4594)).